The sequence spans 199 residues: MNVKSTNISWHRALVDREMREKLLGQNGILIWFTGLSGSGKSTIASELEMRLYNMGRLTYLLDGDNVRHGLNSNLGFTKEDRIENIRRTAEVCKLFVDSGIITISTFISPFKDDRDKVRKLLGKDFVEVYVDCPLEVCESRDPKGIYKKARNGEIKDFTGVDSPYEVPDNPEIVVSTNLDTVQQCVNKILDFLSCKVQE.

Position 35-42 (35-42 (GLSGSGKS)) interacts with ATP. The Phosphoserine intermediate role is filled by Ser109.

This sequence belongs to the APS kinase family.

It carries out the reaction adenosine 5'-phosphosulfate + ATP = 3'-phosphoadenylyl sulfate + ADP + H(+). Its pathway is sulfur metabolism; hydrogen sulfide biosynthesis; sulfite from sulfate: step 2/3. Catalyzes the synthesis of activated sulfate. This Clostridium kluyveri (strain ATCC 8527 / DSM 555 / NBRC 12016 / NCIMB 10680 / K1) protein is Adenylyl-sulfate kinase.